Consider the following 590-residue polypeptide: MEDIKTTWQKIIADTLNGIAPETCDKILPEQINIETPPNPEMGDVAFPLFTFAKSFKSSPAKIASDVCARLLENEDIKKYGMPKAIGPYLNVFLAKGDLASNVLDKVLKEKENYGKTSSLSGKRIMIEFSSPNTNKPLHLGHLRNDALGESISRILKFCGADVFKVNIINDRGVHICKSMIAYQKFGEGKTPESENIKSDRFVGDMYVAFHKYSQENPEKAEAEAKQMLLDWEAGENKELIGLWKKMNGWAIEGIKETYKRTGISFDKLYFESETYLKGKDQILKGLEAGVFYKEEDGSVWVDLAPIKLDKKVLLRSDGTSLYMTQDIGTAISRHKDWPFNQMIYVVGNEQEYHFKVLFYVLKQLGFEWADDLYHLSYGMVNLPEGKMKSREGTVVDADDLINSLQDEALKKIEENGREKEVGDAAVAAENIAVGALHYFLLQVSPKKDMLFNPKESLSFTGNTGPYLQYMGARISSILRKAETAEGKEKLKDGKLNASLLTNESEWELLKTLEDFPEQVERSALRKDPSALTAYLYELSKAFSRFYRDCPILSGEDADLSYTRMELARATKIVLQNAMNLVLIPFMEVM.

The 'HIGH' region signature appears at 132–142 (PNTNKPLHLGH).

Belongs to the class-I aminoacyl-tRNA synthetase family. In terms of assembly, monomer.

It is found in the cytoplasm. It carries out the reaction tRNA(Arg) + L-arginine + ATP = L-arginyl-tRNA(Arg) + AMP + diphosphate. The sequence is that of Arginine--tRNA ligase from Treponema denticola (strain ATCC 35405 / DSM 14222 / CIP 103919 / JCM 8153 / KCTC 15104).